A 617-amino-acid chain; its full sequence is Vacuolar protein sorting-associated protein 33B (617 aa).

This sequence belongs to the STXBP/unc-18/SEC1 family. As to quaternary structure, interacts with vipas39. Widely expressed from 4 hours post-fertilization (hpf) to 24 hpf. At 48 hpf, localized to brain, retina, ear, liver and proximal intestine. This expression pattern is more pronounced at 72 hpf and persists through 5 days post-fertilization (dpf). At 3 dpf and 4 dpf, expression in the liver is predominantly in developing biliary epithelial cells. No expression detected in kidney or spinal cord.

Its subcellular location is the late endosome membrane. It localises to the lysosome membrane. May play a role in vesicle-mediated protein trafficking to lysosomal compartments and in membrane docking/fusion reactions of late endosomes/lysosomes. Required for proper trafficking and targeting of the collagen-modifying enzyme lysyl hydroxylase 3 (LH3) to intracellular collagen. Mediates phagolysosomal fusion in macrophages. Proposed to be involved in endosomal maturation implicating vipas39. In epithelial cells, the vps33b:vipas39 complex may play a role in the apical recycling pathway and in the maintenance of the apical-basolateral polarity. Plays a role in bile duct development. This Danio rerio (Zebrafish) protein is Vacuolar protein sorting-associated protein 33B.